The primary structure comprises 160 residues: Cytochrome b6-f complex subunit 4 (160 aa).

3 consecutive transmembrane segments (helical) span residues 36–56, 95–115, and 128–148; these read LLYI…GLAV, LLGI…PFIE, and IAMS…IGAC.

Belongs to the cytochrome b family. PetD subfamily. In terms of assembly, the 4 large subunits of the cytochrome b6-f complex are cytochrome b6, subunit IV (17 kDa polypeptide, PetD), cytochrome f and the Rieske protein, while the 4 small subunits are PetG, PetL, PetM and PetN. The complex functions as a dimer.

The protein localises to the cellular thylakoid membrane. In terms of biological role, component of the cytochrome b6-f complex, which mediates electron transfer between photosystem II (PSII) and photosystem I (PSI), cyclic electron flow around PSI, and state transitions. The sequence is that of Cytochrome b6-f complex subunit 4 from Prochlorococcus marinus (strain MIT 9312).